Consider the following 124-residue polypeptide: Protein archease (124 aa).

Ca(2+) is bound by residues histidine 7, aspartate 10, aspartate 123, and threonine 124.

The protein belongs to the archease family.

Functionally, activates the tRNA-splicing ligase complex by facilitating the enzymatic turnover of catalytic subunit RtcB. Acts by promoting the guanylylation of RtcB, a key intermediate step in tRNA ligation. Can also alter the NTP specificity of RtcB such that ATP, dGTP or ITP is used efficiently. May also act as a chaperone or modulator of proteins involved in DNA or RNA processing. In Thermotoga maritima (strain ATCC 43589 / DSM 3109 / JCM 10099 / NBRC 100826 / MSB8), this protein is Protein archease.